We begin with the raw amino-acid sequence, 823 residues long: MTQEATKPNIQEPRAERYNPHAIEQKWQGQWQESGLYKFDENAPGEKFYALTMFPYPSGNLHIGHWYANVAPDARARWLRMRGYNVLFPMAFDAFGLPAENAAIKNNTNPATWTYANIERMTGQFSRMGTMIDWSRKFATCDPEYYRWNQWFFIEFWKRGLAYKKGGLVNWCPKDQTVLANEQVVNGHCERCGTAVERRNLSQWYLKITDYAEELLDFSATDMPEKVRAMQTNWIGKSVGAEVTFDTPAGPETVFTTRPDTLMGATFMVLAPEHAKVKELTTDEQRAEVEAYVAAAGRKTDVERQQEGEKTGVFTGSYATHPISGHQLPIWVADYVLVTYGTGSIMAVPAHDERDFAFAKKFDLPIREVIRAEGSEGMGDQPSEPYSGEGQIVNSGEFDGMPGGKASIAAIIARLEERGVAKAKTTYRLRDWLFARQRYWGTPIPFVHCEKCGMQPVPEDQLPVKLPENVAFTPTGQSPLKLDEEWKTTTCPCCGGPAERETDTMDTFVDSSWYMYRYLSPNYDGGPFDPSKAGLLPVDLYTGGIEHAILHLLYSRFWTKVMRDMGLTTQSEPFARLRNQGMVLGEDGEKMSKSRGNVVDPDDLVREYGADTVRAFLMFIAPWELGGPWDPQGINGPSKWLSRVWNVFFEEKVSGPEEKMQGADVRFAVHSALKKVNDDFERMSFNTIISTLMELTNALVKAKRSPVFGTPVWEEALDIFNRMLAPVVPHIAEEIWHERGQKGSVHTAQWPQVDEAAAVRDTVTIGVQVSGKVRGEVSISKTASQEEALSAARAIAEVQKHLEGKTVVKEIYVPGRIINIVAK.

Residues 55-65 carry the 'HIGH' region motif; the sequence is PYPSGNLHIGH. The 'KMSKS' region motif lies at 590-594; sequence KMSKS. ATP is bound at residue Lys593.

This sequence belongs to the class-I aminoacyl-tRNA synthetase family.

The protein resides in the cytoplasm. The enzyme catalyses tRNA(Leu) + L-leucine + ATP = L-leucyl-tRNA(Leu) + AMP + diphosphate. The sequence is that of Leucine--tRNA ligase from Deinococcus radiodurans (strain ATCC 13939 / DSM 20539 / JCM 16871 / CCUG 27074 / LMG 4051 / NBRC 15346 / NCIMB 9279 / VKM B-1422 / R1).